Reading from the N-terminus, the 110-residue chain is UPF0122 protein SPG_1182 (110 aa).

This sequence belongs to the UPF0122 family.

Might take part in the signal recognition particle (SRP) pathway. This is inferred from the conservation of its genetic proximity to ftsY/ffh. May be a regulatory protein. This Streptococcus pneumoniae serotype 19F (strain G54) protein is UPF0122 protein SPG_1182.